A 386-amino-acid polypeptide reads, in one-letter code: Phosphoglycerate kinase (386 aa).

Residues 21 to 23 (DLN), Arg-36, 59 to 62 (HLGR), Arg-113, and Arg-146 contribute to the substrate site. Residues Lys-197, Glu-314, and 340–343 (GGDT) each bind ATP.

The protein belongs to the phosphoglycerate kinase family. Monomer.

It localises to the cytoplasm. It catalyses the reaction (2R)-3-phosphoglycerate + ATP = (2R)-3-phospho-glyceroyl phosphate + ADP. Its pathway is carbohydrate degradation; glycolysis; pyruvate from D-glyceraldehyde 3-phosphate: step 2/5. This is Phosphoglycerate kinase from Azotobacter vinelandii (strain DJ / ATCC BAA-1303).